The chain runs to 1764 residues: Latent-transforming growth factor beta-binding protein 2 (1764 aa).

The signal sequence occupies residues Met1–Ala35. The segment at Pro80–Val140 is disordered. The interval Ile94–Val115 is heparin-binding. Positions Arg108–Gly128 are enriched in polar residues. An N-linked (GlcNAc...) asparagine glycan is attached at Asn175. The EGF-like 1 domain occupies Ile181 to Glu213. Cystine bridges form between Cys185–Cys195, Cys189–Cys201, and Cys203–Cys212. The tract at residues Glu220 to Ala279 is disordered. The segment at Ala226 to Ser243 is heparin-binding. Over residues Leu257 to Ser266 the composition is skewed to pro residues. N-linked (GlcNAc...) asparagine glycosylation is present at Asn330. Leu331–Val341 is a binding site for heparin. The region spanning Arg383–His415 is the EGF-like 2 domain. 3 disulfides stabilise this stretch: Cys387-Cys397, Cys391-Cys403, and Cys405-Cys414. The N-linked (GlcNAc...) asparagine glycan is linked to Asn408. Positions Glu484 to Val529 are disordered. Ser493 is modified (phosphoserine). The 53-residue stretch at Gly538–Gly590 folds into the TB 1 domain. 3 disulfide bridges follow: Cys540/Cys562, Cys549/Cys575, and Cys563/Cys578. An N-linked (GlcNAc...) asparagine glycan is attached at Asn602. The 41-residue stretch at Asp608–Val648 folds into the EGF-like 3; calcium-binding domain. 7 disulfide bridges follow: Cys612–Cys623, Cys618–Cys632, Cys634–Cys647, Cys660–Cys682, Cys669–Cys695, Cys683–Cys698, and Cys684–Cys710. Residues Gly658–Cys710 form the TB 2 domain. Disordered stretches follow at residues Lys729–Leu759 and Ser786–Gln809. Residues Gly834–Thr876 form the EGF-like 4 domain. 45 cysteine pairs are disulfide-bonded: Cys838-Cys851, Cys846-Cys860, Cys862-Cys875, Cys881-Cys892, Cys886-Cys901, Cys903-Cys918, Cys924-Cys935, Cys930-Cys944, Cys946-Cys958, Cys964-Cys975, Cys970-Cys984, Cys987-Cys998, Cys1004-Cys1015, Cys1010-Cys1024, Cys1026-Cys1039, Cys1045-Cys1056, Cys1051-Cys1065, Cys1068-Cys1081, Cys1087-Cys1098, Cys1093-Cys1107, Cys1110-Cys1123, Cys1129-Cys1141, Cys1136-Cys1150, Cys1152-Cys1164, Cys1170-Cys1182, Cys1176-Cys1191, Cys1193-Cys1206, Cys1212-Cys1223, Cys1218-Cys1232, Cys1234-Cys1247, Cys1253-Cys1265, Cys1259-Cys1274, Cys1276-Cys1289, Cys1295-Cys1307, Cys1302-Cys1316, Cys1318-Cys1332, Cys1359-Cys1382, Cys1369-Cys1394, Cys1383-Cys1397, Cys1435-Cys1448, Cys1443-Cys1457, Cys1459-Cys1472, Cys1478-Cys1488, Cys1483-Cys1497, and Cys1499-Cys1512. The EGF-like 5; calcium-binding domain occupies Asp877–Gln919. The EGF-like 6; calcium-binding domain occupies Asp920–Gln959. Residues Asp960–Val999 enclose the EGF-like 7; calcium-binding domain. The 41-residue stretch at Asp1000–Arg1040 folds into the EGF-like 8; calcium-binding domain. Residues Asp1041 to Glu1082 form the EGF-like 9; calcium-binding domain. In terms of domain architecture, EGF-like 10; calcium-binding spans Asp1083–Glu1124. The EGF-like 11; calcium-binding domain maps to Asp1125–Glu1165. Asn1160 carries N-linked (GlcNAc...) asparagine glycosylation. An EGF-like 12; calcium-binding domain is found at Asp1166–Gln1207. Positions Asp1208–Val1248 constitute an EGF-like 13; calcium-binding domain. The region spanning Asp1249–Val1290 is the EGF-like 15; calcium-binding domain. The N-linked (GlcNAc...) asparagine glycan is linked to Asn1255. In terms of domain architecture, EGF-like 16; calcium-binding spans Asp1291 to Arg1333. Residues Met1357–Cys1409 enclose the TB 3 domain. N-linked (GlcNAc...) asparagine glycosylation occurs at Asn1376. The EGF-like 17; calcium-binding domain maps to Asp1431–Gln1473. The 40-residue stretch at Asp1474 to Val1513 folds into the EGF-like 18; calcium-binding domain. A glycan (N-linked (GlcNAc...) asparagine) is linked at Asn1514. The region spanning Asp1530 to Cys1582 is the TB 4 domain. Disulfide bonds link Cys1532–Cys1555, Cys1541–Cys1567, Cys1556–Cys1570, Cys1557–Cys1582, Cys1680–Cys1691, Cys1686–Cys1700, Cys1702–Cys1715, Cys1721–Cys1736, Cys1731–Cys1745, and Cys1747–Cys1760. The tract at residues Ala1585–Glu1764 is C-terminal domain. Residues Gln1676–Val1716 enclose the EGF-like 19; calcium-binding domain. Positions Asp1717 to Ala1761 constitute an EGF-like 20; calcium-binding domain.

The protein belongs to the LTBP family. As to quaternary structure, forms part of the large latent transforming growth factor beta precursor complex; removal is essential for activation of complex. Interacts with SDC4. Interacts (via C-terminal domain) with FBN1 (via N-terminal domain) in a Ca(+2)-dependent manner. In terms of processing, N-Glycosylated. Contains hydroxylated asparagine residues. Expressed in cortical astrocytes and glioma cells. Expression is up-regulated by TGFB1.

It is found in the secreted. It localises to the extracellular space. The protein localises to the extracellular matrix. Functionally, may play an integral structural role in elastic-fiber architectural organization and/or assembly. The protein is Latent-transforming growth factor beta-binding protein 2 (Ltbp2) of Rattus norvegicus (Rat).